A 122-amino-acid polypeptide reads, in one-letter code: MIINESYLNVADNSGAKLLRVIRVMGGSRRKWGTVGDVVVCSVRDAVPNGDLKKGDVVKAVIVRTKKEIRRPDGTYIRFDDNAAVVLDKYNEPKGTRVFGPVAKELREKGFMKIVSLAPEVF.

It belongs to the universal ribosomal protein uL14 family. Part of the 50S ribosomal subunit. Forms a cluster with proteins L3 and L19. In the 70S ribosome, L14 and L19 interact and together make contacts with the 16S rRNA in bridges B5 and B8.

Its function is as follows. Binds to 23S rRNA. Forms part of two intersubunit bridges in the 70S ribosome. The chain is Large ribosomal subunit protein uL14 from Thermosipho africanus (strain TCF52B).